Consider the following 382-residue polypeptide: Succinyl-diaminopimelate desuccinylase (382 aa).

His-70 is a Zn(2+) binding site. Asp-72 is a catalytic residue. Asp-103 contacts Zn(2+). The active-site Proton acceptor is Glu-137. 3 residues coordinate Zn(2+): Glu-138, Glu-166, and His-355.

Belongs to the peptidase M20A family. DapE subfamily. Homodimer. Requires Zn(2+) as cofactor. It depends on Co(2+) as a cofactor.

It carries out the reaction N-succinyl-(2S,6S)-2,6-diaminopimelate + H2O = (2S,6S)-2,6-diaminopimelate + succinate. The protein operates within amino-acid biosynthesis; L-lysine biosynthesis via DAP pathway; LL-2,6-diaminopimelate from (S)-tetrahydrodipicolinate (succinylase route): step 3/3. Catalyzes the hydrolysis of N-succinyl-L,L-diaminopimelic acid (SDAP), forming succinate and LL-2,6-diaminopimelate (DAP), an intermediate involved in the bacterial biosynthesis of lysine and meso-diaminopimelic acid, an essential component of bacterial cell walls. In Paracoccus denitrificans (strain Pd 1222), this protein is Succinyl-diaminopimelate desuccinylase.